The primary structure comprises 193 residues: Riboflavin kinase (193 aa).

An H-T-H motif-like region spans residues 1–59 (MGISQQAASQHLRELEDEGLITRNAEGKGISVMVTDKGRHELLRVYNILHDSLHSRPDH). Residues 60-193 (VEITGTLVSG…TIRIPLEQED (134 aa)) are riboflavin kinase. 69–74 (GMNEGA) is a binding site for CDP. Mg(2+) contacts are provided by Thr-98 and Asn-100. FMN is bound by residues Thr-156 and Glu-164. Residue 169 to 172 (LDIR) coordinates CDP.

This sequence belongs to the archaeal riboflavin kinase family. Mg(2+) serves as cofactor.

It carries out the reaction riboflavin + CTP = CDP + FMN + H(+). It participates in cofactor biosynthesis; FMN biosynthesis; FMN from riboflavin (CTP route): step 1/1. Functionally, catalyzes the CTP-dependent phosphorylation of riboflavin (vitamin B2) to form flavin mononucleotide (FMN). The protein is Riboflavin kinase (ribK) of Cenarchaeum symbiosum (strain A).